We begin with the raw amino-acid sequence, 119 residues long: Large ribosomal subunit protein uL18 (119 aa).

Belongs to the universal ribosomal protein uL18 family. As to quaternary structure, part of the 50S ribosomal subunit; part of the 5S rRNA/L5/L18/L25 subcomplex. Contacts the 5S and 23S rRNAs.

Its function is as follows. This is one of the proteins that bind and probably mediate the attachment of the 5S RNA into the large ribosomal subunit, where it forms part of the central protuberance. The sequence is that of Large ribosomal subunit protein uL18 from Helicobacter pylori (strain HPAG1).